A 92-amino-acid polypeptide reads, in one-letter code: Putative regulatory protein CKL_1364 (92 aa).

The protein belongs to the RemA family.

The sequence is that of Putative regulatory protein CKL_1364 from Clostridium kluyveri (strain ATCC 8527 / DSM 555 / NBRC 12016 / NCIMB 10680 / K1).